Consider the following 148-residue polypeptide: uncharacterized protein (148 aa).

Low complexity predominate over residues 37-94; the sequence is NNNNYNNNNKNNNNNNNNNNNNNNNNNNNNNNNYINSCNSNNNNNNNNNNTKNNNINS. A disordered region spans residues 37-99; it reads NNNNYNNNNK…NNINSRTDKN (63 aa).

This is an uncharacterized protein from Dictyostelium discoideum (Social amoeba).